The primary structure comprises 208 residues: LysM and putative peptidoglycan-binding domain-containing protein 2 (208 aa).

Positions 1–54 (MAEFSPVLPPLRDDGGGGRYGQPLFPRSRSGSESDSELSQSLARTKTRSYGSTA) are disordered. A compositionally biased stretch (low complexity) spans 27-42 (RSRSGSESDSELSQSL). A LysM domain is found at 65 to 109 (IEHRVTDGETLQGIALKYGVTMEQIKRVNKLFSNDCIFLRNTLSI). 2 disordered regions span residues 122-169 (LSLE…EELS) and 187-208 (AARKLKEDGGREEDDTNSYQEI). Residues 129 to 140 (SEGNTPQESPCV) are compositionally biased toward polar residues. Residues 147 to 156 (PSPPPEPSVP) are compositionally biased toward pro residues.

The chain is LysM and putative peptidoglycan-binding domain-containing protein 2 (lysmd2) from Danio rerio (Zebrafish).